A 223-amino-acid chain; its full sequence is Keratin-associated protein 5-4 (223 aa).

Repeat copies occupy residues 21-24, 27-30, 79-82, 89-92, 107-110, 117-120, 135-138, 145-148, 155-158, 173-176, 183-186, 193-196, 203-206, and 213-216. The segment at 21 to 216 is 14 X 4 AA repeats of C-C-X-P; the sequence is CCKPVCCCVP…CCCQSSCCAP (196 aa).

It belongs to the KRTAP type 5 family. In terms of assembly, interacts with hair keratins. Expressed during the active phases of the hair cycle in the medulla and the inner root sheath of the forming hair. Also expressed in the upper layers of the epidermis of skin.

Its function is as follows. In the hair cortex, hair keratin intermediate filaments are embedded in an interfilamentous matrix, consisting of hair keratin-associated protein (KRTAP), which are essential for the formation of a rigid and resistant hair shaft through their extensive disulfide bond cross-linking with abundant cysteine residues of hair keratins. The matrix proteins include the high-sulfur and high-glycine-tyrosine keratins. The protein is Keratin-associated protein 5-4 of Mus musculus (Mouse).